The following is a 154-amino-acid chain: Putative NADPH-dependent 7-cyano-7-deazaguanine reductase (154 aa).

The Proton donor role is filled by D52. Substrate-binding positions include 67–69 (VES) and 86–87 (HE).

The protein belongs to the GTP cyclohydrolase I family. QueF type 1 subfamily.

The protein resides in the cytoplasm. It carries out the reaction 7-aminomethyl-7-carbaguanine + 2 NADP(+) = 7-cyano-7-deazaguanine + 2 NADPH + 3 H(+). It participates in tRNA modification; tRNA-queuosine biosynthesis. Catalyzes the NADPH-dependent reduction of 7-cyano-7-deazaguanine (preQ0) to 7-aminomethyl-7-deazaguanine (preQ1). The protein is Putative NADPH-dependent 7-cyano-7-deazaguanine reductase of Streptococcus pneumoniae serotype 4 (strain ATCC BAA-334 / TIGR4).